An 823-amino-acid chain; its full sequence is Nuclear pore complex protein Nup93-1 (823 aa).

Belongs to the nucleoporin interacting component (NIC) family. In terms of assembly, part of the nuclear pore complex (NPC). Interacts with msk (via C-terminus); this association might be facilitated by Nup75. Interacts with Mad (preferentially when phosphorylated). Interacts with Nup154 (via N-terminus). Interacts with the Polycomb group (PcG) proteins Pc and E(z).

Its subcellular location is the nucleus membrane. It localises to the nucleus. The protein resides in the nuclear pore complex. The protein localises to the nucleoplasm. Functionally, required for nuclear pore complex assembly, maintenance and function. Required for nuclear import of phosphorylated Mad via importin msk. Has no role in classical nuclear localization signal (cNLS)-dependent nuclear import via importin-beta. Mediates the association between the nuclear pore complex and a subclass of silenced regions bound by Polycomb group (PcG) proteins, enables long-range interactions between Polycomb loci and contributes to repression of polycomb targets. Together with Nup62 and Nup154, contributes to karyosome morphology and chromatin organization including attachment to the nuclear envelope in oocytes and nurse cells. In Drosophila melanogaster (Fruit fly), this protein is Nuclear pore complex protein Nup93-1.